Consider the following 152-residue polypeptide: Nucleoside diphosphate kinase (152 aa).

ATP-binding residues include lysine 11, phenylalanine 59, arginine 87, threonine 93, arginine 104, and asparagine 114. Catalysis depends on histidine 117, which acts as the Pros-phosphohistidine intermediate.

Belongs to the NDK family. Homotetramer. Mg(2+) serves as cofactor.

Its subcellular location is the cytoplasm. The enzyme catalyses a 2'-deoxyribonucleoside 5'-diphosphate + ATP = a 2'-deoxyribonucleoside 5'-triphosphate + ADP. It catalyses the reaction a ribonucleoside 5'-diphosphate + ATP = a ribonucleoside 5'-triphosphate + ADP. Major role in the synthesis of nucleoside triphosphates other than ATP. The ATP gamma phosphate is transferred to the NDP beta phosphate via a ping-pong mechanism, using a phosphorylated active-site intermediate. The protein is Nucleoside diphosphate kinase of Prochlorococcus marinus (strain MIT 9515).